We begin with the raw amino-acid sequence, 130 residues long: Small ribosomal subunit protein uS9 (130 aa).

It belongs to the universal ribosomal protein uS9 family.

This is Small ribosomal subunit protein uS9 from Cupriavidus necator (strain ATCC 17699 / DSM 428 / KCTC 22496 / NCIMB 10442 / H16 / Stanier 337) (Ralstonia eutropha).